We begin with the raw amino-acid sequence, 235 residues long: Non-structural maintenance of chromosomes element 1 homolog (235 aa).

The RING-type; atypical zinc finger occupies 181-225; that stretch reads IKNCTLCKCLVLWDIRCGSCNIQYHRGCIQTYLQRRDICPSCGNL. Residue threonine 185 is modified to Phosphothreonine.

This sequence belongs to the NSE1 family. In terms of assembly, component of the Smc5-Smc6 complex which consists at least of Smc5, Smc6, Nse1, Nse2, Nse4 and MAGE. Nse1, Nse4 and MAGE probably form a subcomplex that bridges the head domains of the Smc5-Smc6 heterodimer. Interacts with MAGE and Nse4.

It is found in the nucleus. The catalysed reaction is S-ubiquitinyl-[E2 ubiquitin-conjugating enzyme]-L-cysteine + [acceptor protein]-L-lysine = [E2 ubiquitin-conjugating enzyme]-L-cysteine + N(6)-ubiquitinyl-[acceptor protein]-L-lysine.. Its function is as follows. Component of the SMC5-SMC6 complex, a complex involved in repair of DNA double-strand breaks by homologous recombination. The complex may promote sister chromatid homologous recombination by recruiting the SMC1-SMC3 cohesin complex to double-strand breaks. In Drosophila melanogaster (Fruit fly), this protein is Non-structural maintenance of chromosomes element 1 homolog.